The sequence spans 105 residues: Guanyl-specific ribonuclease U1 (105 aa).

Gln1 is modified (pyrrolidone carboxylic acid). Intrachain disulfides connect Cys8–Cys103 and Cys51–Cys87. The active site involves His37. Residue Glu57 is the Proton acceptor of the active site. His92 acts as the Proton donor in catalysis.

Belongs to the ribonuclease N1/T1 family.

The enzyme catalyses [RNA] containing guanosine + H2O = an [RNA fragment]-3'-guanosine-3'-phosphate + a 5'-hydroxy-ribonucleotide-3'-[RNA fragment].. This is Guanyl-specific ribonuclease U1 from Ustilago sphaerogena (Smut fungus).